A 469-amino-acid polypeptide reads, in one-letter code: GTPase Der (469 aa).

EngA-type G domains follow at residues 3-166 (PVIA…PEDE) and 177-350 (LRLA…ESAN). GTP-binding positions include 9–16 (GRPNVGKS), 56–60 (DTGGI), 118–121 (NKVD), 183–190 (GRPNVGKS), 230–234 (DTAGV), and 295–298 (NKWD). Residues 351–435 (LKVSPAKLTQ…PVKIEFKTSE (85 aa)) enclose the KH-like domain.

It belongs to the TRAFAC class TrmE-Era-EngA-EngB-Septin-like GTPase superfamily. EngA (Der) GTPase family. In terms of assembly, associates with the 50S ribosomal subunit.

Functionally, GTPase that plays an essential role in the late steps of ribosome biogenesis. This is GTPase Der from Acinetobacter baumannii (strain AB0057).